Reading from the N-terminus, the 238-residue chain is Uridylate kinase (238 aa).

Residue 12-15 coordinates ATP; that stretch reads KLSG. Gly-54 contacts UMP. ATP contacts are provided by Gly-55 and Arg-59. UMP-binding positions include Asp-74 and 135 to 142; that span reads TGNPFFTT. Positions 162, 168, and 171 each coordinate ATP.

The protein belongs to the UMP kinase family. As to quaternary structure, homohexamer.

It localises to the cytoplasm. The enzyme catalyses UMP + ATP = UDP + ADP. It functions in the pathway pyrimidine metabolism; CTP biosynthesis via de novo pathway; UDP from UMP (UMPK route): step 1/1. Its activity is regulated as follows. Inhibited by UTP. Its function is as follows. Catalyzes the reversible phosphorylation of UMP to UDP. This chain is Uridylate kinase, found in Bordetella avium (strain 197N).